The following is a 645-amino-acid chain: Acetyl-coenzyme A synthetase (645 aa).

CoA-binding positions include 190–193 (RGGR), threonine 309, and asparagine 333. ATP-binding positions include 385–387 (GEP), 409–414 (DTWWQT), aspartate 498, and arginine 513. Serine 521 contributes to the CoA binding site. An ATP-binding site is contributed by arginine 524. Mg(2+)-binding residues include valine 535, histidine 537, and valine 540. Residue arginine 582 participates in CoA binding. Lysine 607 is modified (N6-acetyllysine).

Belongs to the ATP-dependent AMP-binding enzyme family. Mg(2+) is required as a cofactor. Post-translationally, acetylated. Deacetylation by the SIR2-homolog deacetylase activates the enzyme.

It catalyses the reaction acetate + ATP + CoA = acetyl-CoA + AMP + diphosphate. Functionally, catalyzes the conversion of acetate into acetyl-CoA (AcCoA), an essential intermediate at the junction of anabolic and catabolic pathways. AcsA undergoes a two-step reaction. In the first half reaction, AcsA combines acetate with ATP to form acetyl-adenylate (AcAMP) intermediate. In the second half reaction, it can then transfer the acetyl group from AcAMP to the sulfhydryl group of CoA, forming the product AcCoA. The polypeptide is Acetyl-coenzyme A synthetase (Beijerinckia indica subsp. indica (strain ATCC 9039 / DSM 1715 / NCIMB 8712)).